A 504-amino-acid polypeptide reads, in one-letter code: MTTSIVIGVVLVTVGLTFGWTIRWLYARFHLSACEQRAERILQEAQKEAESKKKSILLEAKEYVLRERNQQERDDRDRRAELQRAERRLLQKEEALSTRAGELDSRERSLKQRDQSLCQEEARYRQELERVSGLTQNQARDLIIKNLENEAKHDAQALINKIEEDAALNAERRARDILVTTMQRITADVTGDVTVSTVNLPSEEMKGRIIGREGRNIRALETLTGADVVVDDTPEAVVISCFDPVRKEIARISLERLVLDGRIHPARIEEIVQKVTQEVSQKIYEEGEKVLFDLGIHDMCPEGVRALGRLYFRTSYGQNVLYHSKEVALLASMLASEIGADVAIAKRGALLHDIGKGVETDSDRNHAEIGMEMARKMNEDPRVVNAVGSHHNDIEPCCVESWLVQVADAISAARPGARREMVDHYVKRLENLEAIAEGFSGVEKAYAIQAGRELRVLVNNDKIPDRDVKALGRDIAKKIESDLKYPGRIRVTLIRETRVVEYAR.

A helical membrane pass occupies residues 2–22 (TTSIVIGVVLVTVGLTFGWTI). One can recognise a KH domain in the interval 194–279 (TVSTVNLPSE…EIVQKVTQEV (86 aa)). The HD domain maps to 320 to 413 (VLYHSKEVAL…VQVADAISAA (94 aa)).

Belongs to the RNase Y family.

The protein localises to the cell membrane. Functionally, endoribonuclease that initiates mRNA decay. In Treponema pallidum (strain Nichols), this protein is Ribonuclease Y.